Consider the following 295-residue polypeptide: 4-hydroxy-tetrahydrodipicolinate synthase 1 (295 aa).

Residue T46 coordinates pyruvate. Y134 (proton donor/acceptor) is an active-site residue. The active-site Schiff-base intermediate with substrate is the K162. V204 contributes to the pyruvate binding site.

Belongs to the DapA family. Homotetramer; dimer of dimers.

It is found in the cytoplasm. It carries out the reaction L-aspartate 4-semialdehyde + pyruvate = (2S,4S)-4-hydroxy-2,3,4,5-tetrahydrodipicolinate + H2O + H(+). Its pathway is amino-acid biosynthesis; L-lysine biosynthesis via DAP pathway; (S)-tetrahydrodipicolinate from L-aspartate: step 3/4. Its function is as follows. Catalyzes the condensation of (S)-aspartate-beta-semialdehyde [(S)-ASA] and pyruvate to 4-hydroxy-tetrahydrodipicolinate (HTPA). This Halalkalibacterium halodurans (strain ATCC BAA-125 / DSM 18197 / FERM 7344 / JCM 9153 / C-125) (Bacillus halodurans) protein is 4-hydroxy-tetrahydrodipicolinate synthase 1.